The following is a 360-amino-acid chain: Peptide chain release factor 1 (360 aa).

Gln235 is subject to N5-methylglutamine. The tract at residues 284–312 (ERQAQAQADTRRNLLGSGDRSDKIRTYNY) is disordered.

This sequence belongs to the prokaryotic/mitochondrial release factor family. In terms of processing, methylated by PrmC. Methylation increases the termination efficiency of RF1.

It localises to the cytoplasm. In terms of biological role, peptide chain release factor 1 directs the termination of translation in response to the peptide chain termination codons UAG and UAA. The sequence is that of Peptide chain release factor 1 from Histophilus somni (strain 129Pt) (Haemophilus somnus).